The sequence spans 90 residues: MMKTAVMFILVVVISLTYSSEEQEVARTYCGRHLANILAYVCFGVEKRGGAQYAPYWQETYLRSRKGPGVVDECCFRPCKLEVLKSYCGV.

Positions 1–20 (MMKTAVMFILVVVISLTYSS) are cleaved as a signal peptide. 3 disulfide bridges follow: Cys-30–Cys-75, Cys-42–Cys-88, and Cys-74–Cys-79. Residues 49–64 (GGAQYAPYWQETYLRS) constitute a propeptide, c peptide like.

This sequence belongs to the insulin family. As to quaternary structure, heterodimer of a B chain and an A chain linked by two disulfide bonds.

The protein localises to the secreted. Brain peptide responsible for activation of prothoracic glands to produce ecdysone in insects. The sequence is that of Bombyxin B-5 (BBXB5) from Bombyx mori (Silk moth).